The sequence spans 554 residues: Arginine--tRNA ligase (554 aa).

The 'HIGH' region signature appears at 132–142 (ANPTGPIHLGG).

The protein belongs to the class-I aminoacyl-tRNA synthetase family. As to quaternary structure, monomer.

It localises to the cytoplasm. The catalysed reaction is tRNA(Arg) + L-arginine + ATP = L-arginyl-tRNA(Arg) + AMP + diphosphate. The protein is Arginine--tRNA ligase of Kineococcus radiotolerans (strain ATCC BAA-149 / DSM 14245 / SRS30216).